Here is a 257-residue protein sequence, read N- to C-terminus: MREKLTVIKVGGKIVEEEATLLQLLNDFAAISGHKVLVHGGGRSATKIAAQLGIESKMVNGRRITDAETLKVVTMVYGGLVNKNIVAGLQARGVNALGLTGADMNVIRSVKRPVKEVDYGFVGDVEKVDASLLADLIHKGVVPVMAPLTHDGQGNMLNTNADTIAGETAKALSALFDVTLVYCFEKKGVLRDENDDDSVIPEITRAEFEQYVADGVIQGGMIPKLENSFEAINAGVTEVVITLASAIKDNEGTRIKK.

Residues 41 to 42 (GG), Arg-63, and Asn-158 contribute to the substrate site.

This sequence belongs to the acetylglutamate kinase family. ArgB subfamily.

The protein localises to the cytoplasm. It catalyses the reaction N-acetyl-L-glutamate + ATP = N-acetyl-L-glutamyl 5-phosphate + ADP. It participates in amino-acid biosynthesis; L-arginine biosynthesis; N(2)-acetyl-L-ornithine from L-glutamate: step 2/4. Functionally, catalyzes the ATP-dependent phosphorylation of N-acetyl-L-glutamate. The chain is Acetylglutamate kinase from Bacteroides thetaiotaomicron (strain ATCC 29148 / DSM 2079 / JCM 5827 / CCUG 10774 / NCTC 10582 / VPI-5482 / E50).